The chain runs to 308 residues: Porphobilinogen deaminase (308 aa).

Position 241 is an S-(dipyrrolylmethanemethyl)cysteine (Cys241).

Belongs to the HMBS family. In terms of assembly, monomer. It depends on dipyrromethane as a cofactor.

The enzyme catalyses 4 porphobilinogen + H2O = hydroxymethylbilane + 4 NH4(+). Its pathway is porphyrin-containing compound metabolism; protoporphyrin-IX biosynthesis; coproporphyrinogen-III from 5-aminolevulinate: step 2/4. Functionally, tetrapolymerization of the monopyrrole PBG into the hydroxymethylbilane pre-uroporphyrinogen in several discrete steps. In Staphylococcus aureus (strain bovine RF122 / ET3-1), this protein is Porphobilinogen deaminase.